Reading from the N-terminus, the 210-residue chain is Uridine kinase (210 aa).

An ATP-binding site is contributed by 12–19 (GGSGSGKT).

The protein belongs to the uridine kinase family.

The protein localises to the cytoplasm. The catalysed reaction is uridine + ATP = UMP + ADP + H(+). It catalyses the reaction cytidine + ATP = CMP + ADP + H(+). It participates in pyrimidine metabolism; CTP biosynthesis via salvage pathway; CTP from cytidine: step 1/3. The protein operates within pyrimidine metabolism; UMP biosynthesis via salvage pathway; UMP from uridine: step 1/1. This chain is Uridine kinase, found in Bacillus pumilus (strain SAFR-032).